Consider the following 543-residue polypeptide: Pectate disaccharide-lyase (543 aa).

It belongs to the polysaccharide lyase 2 family. It depends on Cu cation as a cofactor. Requires Mn(2+) as cofactor. Ni(2+) serves as cofactor.

It localises to the cytoplasm. It carries out the reaction [(1-&gt;4)-alpha-D-galacturonosyl](n) = 4-(4-deoxy-alpha-D-galact-4-enuronosyl)-D-galacturonate + [(1-&gt;4)-alpha-D-galacturonosyl](n-2). It functions in the pathway glycan metabolism; pectin degradation. Functionally, catalyzes the formation of unsaturated digalacturonates from polygalacturonate or short oligogalacturonates. This chain is Pectate disaccharide-lyase (pelW), found in Dickeya dadantii (strain 3937) (Erwinia chrysanthemi (strain 3937)).